A 94-amino-acid chain; its full sequence is Neurotoxin 213 (94 aa).

Residues 1–22 (MLKFILTCTSVILFTAVEDSSC) form the signal peptide. One can recognise an LCN-type CS-alpha/beta domain in the interval 24-88 (KGGNYPISVY…YWDYHRNNCK (65 aa)). 3 cysteine pairs are disulfide-bonded: cysteine 39-cysteine 62, cysteine 48-cysteine 67, and cysteine 52-cysteine 69.

Belongs to the long (3 C-C) scorpion toxin superfamily. As to expression, expressed by the venom gland.

Its subcellular location is the secreted. In Lychas mucronatus (Chinese swimming scorpion), this protein is Neurotoxin 213.